The primary structure comprises 424 residues: Probable ribonuclease FAU-1 (424 aa).

This sequence belongs to the FAU-1 family.

In terms of biological role, probable RNase involved in rRNA stability through maturation and/or degradation of precursor rRNAs. Binds to RNA in loop regions with AU-rich sequences. This Saccharolobus islandicus (strain M.16.27) (Sulfolobus islandicus) protein is Probable ribonuclease FAU-1.